Here is a 145-residue protein sequence, read N- to C-terminus: Small ribosomal subunit protein uS19 (145 aa).

The protein belongs to the universal ribosomal protein uS19 family. Component of the small ribosomal subunit.

Its subcellular location is the cytoplasm. Its function is as follows. Component of the small ribosomal subunit. The ribosome is a large ribonucleoprotein complex responsible for the synthesis of proteins in the cell. In Xenopus laevis (African clawed frog), this protein is Small ribosomal subunit protein uS19 (rps15).